Consider the following 271-residue polypeptide: Sec-independent protein translocase protein TatC (271 aa).

A run of 5 helical transmembrane segments spans residues 24-44, 78-98, 112-132, 159-179, and 215-235; these read ISVG…EQIF, FFAG…LFIA, FLFV…YFVF, LVIK…GLLL, and FTQV…IFFG. Residues 247–271 are disordered; that stretch reads AAEEAQWAADHNVDDDDVDHPEHKA.

Belongs to the TatC family. As to quaternary structure, the Tat system comprises two distinct complexes: a TatABC complex, containing multiple copies of TatA, TatB and TatC subunits, and a separate TatA complex, containing only TatA subunits. Substrates initially bind to the TatABC complex, which probably triggers association of the separate TatA complex to form the active translocon.

The protein localises to the cell inner membrane. Part of the twin-arginine translocation (Tat) system that transports large folded proteins containing a characteristic twin-arginine motif in their signal peptide across membranes. Together with TatB, TatC is part of a receptor directly interacting with Tat signal peptides. The protein is Sec-independent protein translocase protein TatC of Magnetococcus marinus (strain ATCC BAA-1437 / JCM 17883 / MC-1).